Consider the following 179-residue polypeptide: UPF0302 protein YpiB (179 aa).

This sequence belongs to the UPF0302 family.

This is UPF0302 protein YpiB (ypiB) from Bacillus subtilis (strain 168).